A 419-amino-acid chain; its full sequence is MSSSGAMPAVSSASSSAAVGILSATTAKTKTKKKHFVQQKVKVFRASDPLISVFMWGVNHSVNELIQVPVPVMLLPDDFKANSKIKVTNHLFNRENLPSHFKFKDYCPQVFRNLRERFGIDDQDFQASLTRSSPYCESEGHDGRFLLSYDKTLVIKEISSEDVADMHNILSHYHQHIVKCHGNTLLPQFLGMYRLSVDNEDSYIMVMRNMFSHRLTVHRKYDLKGSLVSREASDKEKIKELPTLKDMDFLNKSQKVYVDEEQKKNFMEKLKRDVDFLVQLKLMDYSLLLGIHEVFRAEQEEEEDLEEDHTENESSPHMNVGSYGTSPEGIAGYLNSHKPLGPGEFEPIIDVYAIKSSDNAPQKEVYFMGLIDILTHYDAKKKAAHAAKTVKHGAGAEISTVHPDQYGKRFLEFVTNIFA.

The PIPK domain occupies 46–418 (ASDPLISVFM…RFLEFVTNIF (373 aa)). Acidic residues predominate over residues 299 to 310 (QEEEEDLEEDHT). The disordered stretch occupies residues 299-320 (QEEEEDLEEDHTENESSPHMNV).

In terms of processing, phosphorylated, phosphorylation is induced by EGF.

It is found in the endoplasmic reticulum. Its subcellular location is the cytoplasm. It carries out the reaction a 1,2-diacyl-sn-glycero-3-phospho-(1D-myo-inositol-5-phosphate) + ATP = a 1,2-diacyl-sn-glycero-3-phospho-(1D-myo-inositol-4,5-bisphosphate) + ADP + H(+). It catalyses the reaction 1,2-dihexadecanoyl-sn-glycero-3-phospho-(1D-myo-inositol-5-phosphate) + ATP = 1,2-dihexadecanoyl-sn-glycero-3-phospho-(1D-myo-inositol-4,5-bisphosphate) + ADP + H(+). The enzyme catalyses 1,2-dihexadecanoyl-sn-glycero-3-phospho-(1D-myo-inositol-5-phosphate) + GTP = 1,2-dihexadecanoyl-sn-glycero-3-phospho-(1D-myo-inositol-4,5-bisphosphate) + GDP + H(+). In terms of biological role, phosphatidylinositol 5-phosphate 4-kinase with low enzymatic activity. May be a GTP sensor, has higher GTP-dependent kinase activity than ATP-dependent kinase activity. This Xenopus tropicalis (Western clawed frog) protein is Phosphatidylinositol 5-phosphate 4-kinase type-2 gamma (pip4k2c).